Reading from the N-terminus, the 380-residue chain is MGIQGLAKLIADVAPSAIRENDIKSYFGRKVAIDASMSIYQFLIAVRQGGDVLQNEEGETTSHLMGMFYRTIRMMENGIKPVYVFDGKPPQLKSGELAKRSERRAEAEKQLQEAQAAGAEAEVEKFTKRLVKVTKQHNDECKHLLSLMGIPYLDAPSEAEASCAALVKAGKVYAAATEDMDCLTFGSPVLMRHLTASEAKKLPIQEFHLSRILQELGLNQEQFVDLCILLGSDYCESIRGIGPKRAVDLIQKHKSIEEIVRRLDPNKYPVPENWLHKEAQQLFLEPEVLDPESVELKWSEPNEEELIKFMCGEKQFSEERIRSGVRRLSKSRQGSTQGRLDDFFKVTGSLSSAKRKEPEPKGAAKKKAKTGAAGKFKRGK.

The N-domain stretch occupies residues Met1–Arg104. Arg19 is modified (symmetric dimethylarginine; by PRMT5). Asp34 is a Mg(2+) binding site. Arg47 and Arg70 together coordinate DNA. Lys80 bears the N6-acetyllysine mark. Asp86 is a Mg(2+) binding site. Symmetric dimethylarginine; by PRMT5 is present on residues Arg100 and Arg104. The tract at residues Glu122–His253 is I-domain. The Mg(2+) site is built by Glu158, Glu160, Asp179, and Asp181. Glu158 is a DNA binding site. A Phosphoserine; by CDK2 modification is found at Ser187. Arg192 is modified (symmetric dimethylarginine; by PRMT5). Position 197 is a phosphoserine (Ser197). Residues Gly231 and Asp233 each coordinate DNA. Asp233 provides a ligand contact to Mg(2+). Phosphoserine occurs at positions 255, 293, and 335. Residues Arg327 to Lys380 form a disordered region. At Thr336 the chain carries Phosphothreonine. The interaction with PCNA stretch occupies residues Thr336 to Phe344. N6-acetyllysine is present on residues Lys354, Lys375, Lys377, and Lys380. Basic residues predominate over residues Ala363–Lys380.

Belongs to the XPG/RAD2 endonuclease family. FEN1 subfamily. As to quaternary structure, interacts with PCNA. Three molecules of FEN1 bind to one PCNA trimer with each molecule binding to one PCNA monomer. PCNA stimulates the nuclease activity without altering cleavage specificity. The C-terminal domain binds EP300; can bind simultaneously to both PCNA and EP300. Interacts with DDX11; this interaction is direct and increases flap endonuclease activity of FEN1. Interacts with WDR4; regulating its endonuclease activity. Interacts with POLB. The cofactor is Mg(2+). In terms of processing, acetylated by EP300. Acetylation inhibits both endonuclease and exonuclease activity. Acetylation also reduces DNA-binding activity but does not affect interaction with PCNA or EP300. Post-translationally, phosphorylation upon DNA damage induces relocalization to the nuclear plasma. Phosphorylation at Ser-187 by CDK2 occurs during late S-phase and results in dissociation from PCNA. Methylation at Arg-192 by PRMT5 impedes Ser-187 phosphorylation and increases interaction with PCNA.

It localises to the nucleus. It is found in the nucleolus. The protein resides in the nucleoplasm. Its subcellular location is the mitochondrion. Structure-specific nuclease with 5'-flap endonuclease and 5'-3' exonuclease activities involved in DNA replication and repair. During DNA replication, cleaves the 5'-overhanging flap structure that is generated by displacement synthesis when DNA polymerase encounters the 5'-end of a downstream Okazaki fragment. It enters the flap from the 5'-end and then tracks to cleave the flap base, leaving a nick for ligation. Also involved in the long patch base excision repair (LP-BER) pathway, by cleaving within the apurinic/apyrimidinic (AP) site-terminated flap. Acts as a genome stabilization factor that prevents flaps from equilibrating into structures that lead to duplications and deletions. Also possesses 5'-3' exonuclease activity on nicked or gapped double-stranded DNA, and exhibits RNase H activity. Also involved in replication and repair of rDNA and in repairing mitochondrial DNA. This Bos taurus (Bovine) protein is Flap endonuclease 1.